The following is a 382-amino-acid chain: Carbamoyl phosphate synthase small chain (382 aa).

The tract at residues Met1–Asp189 is CPSase. Ser47, Gly241, and Gly243 together coordinate L-glutamine. One can recognise a Glutamine amidotransferase type-1 domain in the interval His193–Ser380. Cys269 (nucleophile) is an active-site residue. 5 residues coordinate L-glutamine: Leu270, Gln273, Asn311, Gly313, and Phe314. Catalysis depends on residues His353 and Glu355.

The protein belongs to the CarA family. As to quaternary structure, composed of two chains; the small (or glutamine) chain promotes the hydrolysis of glutamine to ammonia, which is used by the large (or ammonia) chain to synthesize carbamoyl phosphate. Tetramer of heterodimers (alpha,beta)4.

The enzyme catalyses hydrogencarbonate + L-glutamine + 2 ATP + H2O = carbamoyl phosphate + L-glutamate + 2 ADP + phosphate + 2 H(+). It carries out the reaction L-glutamine + H2O = L-glutamate + NH4(+). It participates in amino-acid biosynthesis; L-arginine biosynthesis; carbamoyl phosphate from bicarbonate: step 1/1. It functions in the pathway pyrimidine metabolism; UMP biosynthesis via de novo pathway; (S)-dihydroorotate from bicarbonate: step 1/3. Small subunit of the glutamine-dependent carbamoyl phosphate synthetase (CPSase). CPSase catalyzes the formation of carbamoyl phosphate from the ammonia moiety of glutamine, carbonate, and phosphate donated by ATP, constituting the first step of 2 biosynthetic pathways, one leading to arginine and/or urea and the other to pyrimidine nucleotides. The small subunit (glutamine amidotransferase) binds and cleaves glutamine to supply the large subunit with the substrate ammonia. The chain is Carbamoyl phosphate synthase small chain from Salmonella typhimurium (strain LT2 / SGSC1412 / ATCC 700720).